We begin with the raw amino-acid sequence, 492 residues long: Vacuolar fusion protein CCZ1 homolog (492 aa).

Positions 255–275 are disordered; it reads SVHAGPTSSSSNGTASVERPL. Residues 260–269 are compositionally biased toward polar residues; that stretch reads PTSSSSNGTA.

This sequence belongs to the CCZ1 family. As to quaternary structure, interacts with MON1.

The protein resides in the endosome. It localises to the prevacuolar compartment. In terms of biological role, plays an important role in membrane trafficking through the secretory apparatus. In complex with MON1, acts as a guanine exchange factor (GEF) for Rab7 protein family. Promotes the exchange of GDP to GTP, converting it from an inactive GDP-bound form into an active GTP-bound form. The active form is involved in protein trafficking from prevacuolar compartments (PVCs) to vacuoles. May serve as a linker between Rab5 and Rab7 protein families in PVCs and mediate PVC maturation. The chain is Vacuolar fusion protein CCZ1 homolog from Oryza sativa subsp. japonica (Rice).